The following is a 560-amino-acid chain: MTPQKSDACSDPVYTVGDYLLDRLAELGVSEIFGVPGDYNLQFLDHIVAHPTIRWVGSANELNAGYAADGYGRLRGMSAVVTTFGVGELSVTNAIAGSYAEHVPVVHIVGGPTKDAQGTRRALHHSLGDGDFEHFLRISREITCAQANLMPATAGREIDRVLSEVREQKRPGYILLSSDVARFPTEPPAAPLPRYPGGTSPRALSLFTKAAIELIADHQLTVLADLLVHRLQAVKELEALLAADVVPHATLMWGKSLLDESSPNFLGIYAGAASAERVRAAIEGAPVLVTAGVVFTNMVSGFFSQRIDPARTIDIGQYQSSVADQVFAPLEMSAALQALATILTGRGISSPPVVPPPAEPPPAMPARDEPLTQQMVWDRVCSALTPGNVVLADQGTSFYGMADHRLPQGVTFIGQPLWGSIGYTLPAAVGAAVAHPDRRTVLLIGDGAAQLTVQELGTFSREGLSPVIVVVNNDGYTVERAIHGETAPYNDIVSWNWTELPSALGVTNHLAFRAQTYGQLDDALTVAAARRDRMVLVEVVLPRLEIPRLLGQLVGSMAPQ.

Glu61 is a binding site for thiamine diphosphate. The interval 396-478 (TSFYGMADHR…VVVNNDGYTV (83 aa)) is thiamine pyrophosphate binding. 3 residues coordinate Mg(2+): Asp446, Asn473, and Gly475.

The protein belongs to the TPP enzyme family. Requires a metal cation as cofactor. The cofactor is thiamine diphosphate.

Its function is as follows. Decarboxylates branched-chain and aromatic alpha-keto acids to aldehydes. The protein is Alpha-keto-acid decarboxylase (kdc) of Mycobacterium tuberculosis (strain CDC 1551 / Oshkosh).